The chain runs to 398 residues: Yellow-related salivary protein SP04 (398 aa).

The first 18 residues, 1 to 18, serve as a signal peptide directing secretion; it reads MKWFLFLLSTIFVQGILG. The tract at residues 73–94 is disordered; sequence TLTEIERKKHPERSPPLSKFSG. The span at 75 to 85 shows a compositional bias: basic and acidic residues; that stretch reads TEIERKKHPER.

The protein belongs to the major royal jelly protein family. In terms of tissue distribution, female salivary gland (at protein level).

It localises to the secreted. Its function is as follows. Probably modulates blood feeding of sand flies on vertebrate species by binding and sequestering different mediators involved in the host response. Binds biogenic amines. Binds serotonin with high affinity. Binds histamine with low affinity. The protein is Yellow-related salivary protein SP04 of Phlebotomus argentipes (Phlebotomine sand fly).